Reading from the N-terminus, the 258-residue chain is Proliferating cell nuclear antigen (258 aa).

A DNA-binding region spans residues 61–80 (RCDHPVTLGMDLTSLSKILR). Lysine 127 is covalently cross-linked (Glycyl lysine isopeptide (Lys-Gly) (interchain with G-Cter in SUMO)). Residue lysine 164 forms a Glycyl lysine isopeptide (Lys-Gly) (interchain with G-Cter in SUMO); alternate linkage. Residue lysine 164 forms a Glycyl lysine isopeptide (Lys-Gly) (interchain with G-Cter in ubiquitin); alternate linkage.

It belongs to the PCNA family. As to quaternary structure, homotrimer. Interacts with RAD30. Interacts with MCM10. Interacts with UBP10. Sumoylated on Lys-164, and to a lesser extent on Lys-127 by the UBC9/SIZ1 complex during S-phase; which impairs ubiquitination and function in DNA repair. In terms of processing, monoubiquitinated on Lys-164 by the UBC2/RAD18 complex upon DNA damage, and then polyubiquitinated through 'Lys-63'-linkage by UBC13/MMS2. Ubiquitination is required for UBC2-mediated DNA repair. Post-translationally, lys-164 is deubiquitinated by UBP10.

The protein resides in the nucleus. Its function is as follows. This protein is an auxiliary protein of DNA polymerase delta and is involved in the control of eukaryotic DNA replication by increasing the polymerase's processibility during elongation of the leading strand. Involved in DNA repair. The polypeptide is Proliferating cell nuclear antigen (POL30) (Saccharomyces cerevisiae (strain ATCC 204508 / S288c) (Baker's yeast)).